We begin with the raw amino-acid sequence, 423 residues long: ATP-dependent RNA helicase RhlB (423 aa).

Positions 9–37 (LRFSDLPLHHQVLAALQEKGFDYCTPIQA) match the Q motif motif. The Helicase ATP-binding domain occupies 40-217 (LPMSLAGKDV…FEDMNDPEYV (178 aa)). 53–60 (AQTGTGKT) serves as a coordination point for ATP. Residues 163 to 166 (DEAD) carry the DEAD box motif. Residues 241–388 (KMALLLTLLE…VSQYDVAALL (148 aa)) enclose the Helicase C-terminal domain. Residues 397–423 (KRGNNNSKNSANSNRTFQKKRSLKRNF) form a disordered region. Over residues 400 to 410 (NNNSKNSANSN) the composition is skewed to low complexity. Basic residues predominate over residues 413-423 (FQKKRSLKRNF).

This sequence belongs to the DEAD box helicase family. RhlB subfamily. As to quaternary structure, component of the RNA degradosome, which is a multiprotein complex involved in RNA processing and mRNA degradation.

It is found in the cytoplasm. The catalysed reaction is ATP + H2O = ADP + phosphate + H(+). Functionally, DEAD-box RNA helicase involved in RNA degradation. Has RNA-dependent ATPase activity and unwinds double-stranded RNA. The sequence is that of ATP-dependent RNA helicase RhlB from Pasteurella multocida (strain Pm70).